We begin with the raw amino-acid sequence, 52 residues long: uncharacterized protein (52 aa).

Residues 21 to 40 form a helical membrane-spanning segment; the sequence is VAMNSYVELLFLSVPLIHIF.

Its subcellular location is the cell membrane. This is an uncharacterized protein from Bacillus subtilis (strain 168).